We begin with the raw amino-acid sequence, 338 residues long: Tetraacyldisaccharide 4'-kinase (338 aa).

51-58 (HVGGAGKT) contributes to the ATP binding site.

Belongs to the LpxK family.

It catalyses the reaction a lipid A disaccharide + ATP = a lipid IVA + ADP + H(+). Its pathway is glycolipid biosynthesis; lipid IV(A) biosynthesis; lipid IV(A) from (3R)-3-hydroxytetradecanoyl-[acyl-carrier-protein] and UDP-N-acetyl-alpha-D-glucosamine: step 6/6. Its function is as follows. Transfers the gamma-phosphate of ATP to the 4'-position of a tetraacyldisaccharide 1-phosphate intermediate (termed DS-1-P) to form tetraacyldisaccharide 1,4'-bis-phosphate (lipid IVA). The sequence is that of Tetraacyldisaccharide 4'-kinase from Bradyrhizobium diazoefficiens (strain JCM 10833 / BCRC 13528 / IAM 13628 / NBRC 14792 / USDA 110).